The sequence spans 73 residues: Small, acid-soluble spore protein C2 (73 aa).

The protein belongs to the alpha/beta-type SASP family.

Its function is as follows. SASP are bound to spore DNA. They are double-stranded DNA-binding proteins that cause DNA to change to an a-like conformation. They protect the DNA backbone from chemical and enzymatic cleavage and are thus involved in dormant spore's high resistance to UV light. The polypeptide is Small, acid-soluble spore protein C2 (SASP-C2) (Priestia megaterium (Bacillus megaterium)).